The following is a 504-amino-acid chain: Deoxyguanosinetriphosphate triphosphohydrolase (504 aa).

One can recognise an HD domain in the interval 66–273 (RLTHSLEVQQ…MEAADDISYC (208 aa)).

It belongs to the dGTPase family. Type 1 subfamily. Homotetramer. It depends on Mg(2+) as a cofactor.

It catalyses the reaction dGTP + H2O = 2'-deoxyguanosine + triphosphate + H(+). Functionally, dGTPase preferentially hydrolyzes dGTP over the other canonical NTPs. This chain is Deoxyguanosinetriphosphate triphosphohydrolase, found in Klebsiella pneumoniae subsp. pneumoniae (strain ATCC 700721 / MGH 78578).